Consider the following 123-residue polypeptide: UPF0102 protein Cbei_1183 (123 aa).

The protein belongs to the UPF0102 family.

This chain is UPF0102 protein Cbei_1183, found in Clostridium beijerinckii (strain ATCC 51743 / NCIMB 8052) (Clostridium acetobutylicum).